Reading from the N-terminus, the 683-residue chain is MSRHHRPFTWGGAQPGASFSNPTSPTLEASTFGFEPSVPDIYRRAWILVTKDASAELFADTSDADIHLGLLHKLLTSAGGLGPGSAEQIVNSACKGSRCSRSDFYCALGLLHQMQQGEELDVHLVQQRLTMGSLSAPVLDLSDATLNPHSHHTFPPTAPSGPSRIDPRPSTFMREMSDPWNANSSGSYNGIDTRPAYNQYDAMPQQYDTLNSHDSALPAGFAGNVSSGSFERIKFNAGDDRRSHQLLAHNQGSSTDTFLAPDRTEARARQPNTRQERPFSYMSDTAETNAVDAAEDPAADLPEDQVTVRLRSELEGFIIKHNVYIVSSSLRKSQVTRRYSDWLWLAECLVKRYPFRCLPVLPPKRIAMPIAGRHLSADDLFIERRRRGLERFLRMLTCHPMLREDKLVEVFFTEPRPIAEWKSSAPALFLDEEGLIKTVDEAERMSIPEDLQLKLTQQRQAIPELLERWTAMVALFERIVKRNDAAAADYSRLNFSLLSVIETSARRWRPGSDNGKKTEEIMSTMASIFQDHSDTTSSRVSAVSLSTLEGMKAQRDLILSFRDLIGRIDRQLVDPIDMLKKRIEASQKRITTLAASANSNSASIQQEQATLSAQVKQDTQSIQKYLNRRIHAKKTVWEELIWFHHRFKAVEEDMQKFVRDETFFLSTLTRMWEATEMKMKMIR.

Disordered stretches follow at residues 1–25 (MSRH…PTSP) and 246–276 (LLAH…TRQE). A compositionally biased stretch (polar residues) spans 248–257 (AHNQGSSTDT). In terms of domain architecture, PX spans 302–418 (PEDQVTVRLR…EVFFTEPRPI (117 aa)). Arginine 338, serine 340, lysine 364, and arginine 385 together coordinate a 1,2-diacyl-sn-glycero-3-phospho-(1D-myo-inositol-3-phosphate).

This sequence belongs to the sorting nexin family.

It is found in the cytoplasm. It localises to the membrane. Functionally, required for vacuolar protein sorting. This Mycosarcoma maydis (Corn smut fungus) protein is Sorting nexin MVP1 (MVP1).